The primary structure comprises 492 residues: Glutamyl-tRNA(Gln) amidotransferase subunit A (492 aa).

Active-site charge relay system residues include Lys78 and Ser158. Residue Ser182 is the Acyl-ester intermediate of the active site.

Belongs to the amidase family. GatA subfamily. Heterotrimer of A, B and C subunits.

The catalysed reaction is L-glutamyl-tRNA(Gln) + L-glutamine + ATP + H2O = L-glutaminyl-tRNA(Gln) + L-glutamate + ADP + phosphate + H(+). Its function is as follows. Allows the formation of correctly charged Gln-tRNA(Gln) through the transamidation of misacylated Glu-tRNA(Gln) in organisms which lack glutaminyl-tRNA synthetase. The reaction takes place in the presence of glutamine and ATP through an activated gamma-phospho-Glu-tRNA(Gln). This chain is Glutamyl-tRNA(Gln) amidotransferase subunit A, found in Rhodopseudomonas palustris (strain BisB18).